Consider the following 140-residue polypeptide: Putative pre-16S rRNA nuclease (140 aa).

The protein belongs to the YqgF nuclease family.

Its subcellular location is the cytoplasm. Its function is as follows. Could be a nuclease involved in processing of the 5'-end of pre-16S rRNA. This Vibrio vulnificus (strain CMCP6) protein is Putative pre-16S rRNA nuclease.